The following is a 222-amino-acid chain: UPF0758 protein YicR (222 aa).

Positions 100 to 222 (PLLSPEMTRE…YVSFAERGWI (123 aa)) constitute an MPN domain. Zn(2+) is bound by residues H171, H173, and D184. The short motif at 171–184 (HNHPSGCAEPSKAD) is the JAMM motif element.

This sequence belongs to the UPF0758 family. YicR subfamily.

This chain is UPF0758 protein YicR, found in Escherichia coli O9:H4 (strain HS).